The following is a 73-amino-acid chain: uncharacterized protein (73 aa).

The helical transmembrane segment at 37-57 (AIIITVAVVAFGALTLGAIGA) threads the bilayer.

The protein localises to the membrane. This is an uncharacterized protein from Natronomonas pharaonis (strain ATCC 35678 / DSM 2160 / CIP 103997 / JCM 8858 / NBRC 14720 / NCIMB 2260 / Gabara) (Halobacterium pharaonis).